Here is a 119-residue protein sequence, read N- to C-terminus: Anamorsin homolog (119 aa).

The tract at residues 33–119 (LKQATKGEDC…KVKLNLTDDI (87 aa)) is disordered. 4 residues coordinate [2Fe-2S] cluster: C42, C49, C52, and C54. Residues 42–54 (CTTRRRACKNCVC) are fe-S binding site A. [4Fe-4S] cluster-binding residues include C81, C84, C92, and C95. 2 consecutive short sequence motifs (cx2C motif) follow at residues 81–84 (CGNC) and 92–95 (CANC). The tract at residues 81–95 (CGNCAKGDAFRCANC) is fe-S binding site B.

This sequence belongs to the anamorsin family. As to quaternary structure, monomer. [2Fe-2S] cluster is required as a cofactor. The cofactor is [4Fe-4S] cluster.

The protein localises to the cytoplasm. It is found in the mitochondrion intermembrane space. Its function is as follows. Component of the cytosolic iron-sulfur (Fe-S) protein assembly (CIA) machinery. Required for the maturation of extramitochondrial Fe-S proteins. Part of an electron transfer chain functioning in an early step of cytosolic Fe-S biogenesis, facilitating the de novo assembly of a [4Fe-4S] cluster on the cytosolic Fe-S scaffold complex. Electrons are transferred from NADPH via a FAD- and FMN-containing diflavin oxidoreductase. Together with the diflavin oxidoreductase, also required for the assembly of the diferric tyrosyl radical cofactor of ribonucleotide reductase (RNR), probably by providing electrons for reduction during radical cofactor maturation in the catalytic small subunit. The protein is Anamorsin homolog of Leishmania braziliensis.